The primary structure comprises 181 residues: Ribosome maturation factor RimM (181 aa).

The region spanning 98–172 (EDEFYFEDLI…RIVIPELSLW (75 aa)) is the PRC barrel domain.

It belongs to the RimM family. Binds ribosomal protein uS19.

Its subcellular location is the cytoplasm. Functionally, an accessory protein needed during the final step in the assembly of 30S ribosomal subunit, possibly for assembly of the head region. Essential for efficient processing of 16S rRNA. May be needed both before and after RbfA during the maturation of 16S rRNA. It has affinity for free ribosomal 30S subunits but not for 70S ribosomes. This Hyphomonas neptunium (strain ATCC 15444) protein is Ribosome maturation factor RimM.